Consider the following 143-residue polypeptide: Endoribonuclease YbeY (143 aa).

Zn(2+) contacts are provided by H113, H117, and D123.

Belongs to the endoribonuclease YbeY family. The cofactor is Zn(2+).

It localises to the cytoplasm. In terms of biological role, single strand-specific metallo-endoribonuclease involved in late-stage 70S ribosome quality control and in maturation of the 3' terminus of the 16S rRNA. The sequence is that of Endoribonuclease YbeY from Elusimicrobium minutum (strain Pei191).